A 223-amino-acid chain; its full sequence is MNPAAAPLTLALSKGRIFEETMPLLAEAGIEVPENPESSRKLILPTSDPGLRLIIVRASDVPTYVQYGAADLGIAGKDVLIEHAAQQSGRLYQPIDLNIAKCRLCVAVRQDFDYQAAVHQGARLRVATKYVQSAREHFAAKGVHVDIIKLYGSMELAPLVGLADAIVDLVSTGGTLRANGLAAVEDVMPISSRLIVNQAALKTRGARLQPLIDAFRRASERIA.

It belongs to the ATP phosphoribosyltransferase family. Short subfamily. Heteromultimer composed of HisG and HisZ subunits.

The protein localises to the cytoplasm. The enzyme catalyses 1-(5-phospho-beta-D-ribosyl)-ATP + diphosphate = 5-phospho-alpha-D-ribose 1-diphosphate + ATP. It functions in the pathway amino-acid biosynthesis; L-histidine biosynthesis; L-histidine from 5-phospho-alpha-D-ribose 1-diphosphate: step 1/9. Its function is as follows. Catalyzes the condensation of ATP and 5-phosphoribose 1-diphosphate to form N'-(5'-phosphoribosyl)-ATP (PR-ATP). Has a crucial role in the pathway because the rate of histidine biosynthesis seems to be controlled primarily by regulation of HisG enzymatic activity. The chain is ATP phosphoribosyltransferase from Bordetella pertussis (strain Tohama I / ATCC BAA-589 / NCTC 13251).